A 177-amino-acid polypeptide reads, in one-letter code: Peptide deformylase (177 aa).

Residues C98 and H140 each contribute to the Fe cation site. The active site involves E141. Residue H144 participates in Fe cation binding.

It belongs to the polypeptide deformylase family. Requires Fe(2+) as cofactor.

The catalysed reaction is N-terminal N-formyl-L-methionyl-[peptide] + H2O = N-terminal L-methionyl-[peptide] + formate. Removes the formyl group from the N-terminal Met of newly synthesized proteins. Requires at least a dipeptide for an efficient rate of reaction. N-terminal L-methionine is a prerequisite for activity but the enzyme has broad specificity at other positions. This is Peptide deformylase from Zymomonas mobilis subsp. mobilis (strain ATCC 31821 / ZM4 / CP4).